Consider the following 227-residue polypeptide: 7-cyano-7-deazaguanine synthase (227 aa).

8-18 (FSGGQDSTTCL) lines the ATP pocket. Zn(2+) is bound by residues Cys-187, Cys-196, Cys-199, and Cys-202.

It belongs to the QueC family. The cofactor is Zn(2+).

The enzyme catalyses 7-carboxy-7-deazaguanine + NH4(+) + ATP = 7-cyano-7-deazaguanine + ADP + phosphate + H2O + H(+). It functions in the pathway purine metabolism; 7-cyano-7-deazaguanine biosynthesis. Its function is as follows. Catalyzes the ATP-dependent conversion of 7-carboxy-7-deazaguanine (CDG) to 7-cyano-7-deazaguanine (preQ(0)). In Aliivibrio salmonicida (strain LFI1238) (Vibrio salmonicida (strain LFI1238)), this protein is 7-cyano-7-deazaguanine synthase.